Reading from the N-terminus, the 213-residue chain is 3-isopropylmalate dehydratase small subunit (213 aa).

This sequence belongs to the LeuD family. LeuD type 1 subfamily. In terms of assembly, heterodimer of LeuC and LeuD.

It carries out the reaction (2R,3S)-3-isopropylmalate = (2S)-2-isopropylmalate. It participates in amino-acid biosynthesis; L-leucine biosynthesis; L-leucine from 3-methyl-2-oxobutanoate: step 2/4. Catalyzes the isomerization between 2-isopropylmalate and 3-isopropylmalate, via the formation of 2-isopropylmaleate. The polypeptide is 3-isopropylmalate dehydratase small subunit (Pseudomonas savastanoi pv. phaseolicola (strain 1448A / Race 6) (Pseudomonas syringae pv. phaseolicola (strain 1448A / Race 6))).